The sequence spans 769 residues: Dolichyl-phosphate-mannose--protein mannosyltransferase 2 (769 aa).

Positions 1–44 (MSTSVEPNETEALLRKQNDLSTTASIEEKYPHQQGEAAEDDDDT) are disordered. Residue Asn8 is glycosylated (N-linked (GlcNAc...) asparagine). A helical membrane pass occupies residues 59–79 (SLKQVESILAPIVFTALSFFV). Asn132 carries N-linked (GlcNAc...) asparagine glycosylation. The next 3 membrane-spanning stretches (helical) occupy residues 152-169 (MRLF…LAYF), 176-194 (FSMF…ESSY), and 200-218 (FILL…VFCF). N-linked (GlcNAc...) asparagine glycosylation is present at Asn226. Transmembrane regions (helical) follow at residues 252–272 (VKMV…VDLW) and 288–308 (HWFA…MLSF). An N-linked (GlcNAc...) asparagine glycan is attached at Asn324. In terms of domain architecture, MIR 1 spans 342 to 397 (PREVSMFHSVITLKNQGLSGGLLHSHVQTFPEGSKQQQVTTYGHKDSNNNWIFQRA). N-linked (GlcNAc...) asparagine glycosylation is found at Asn408, Asn453, and Asn462. MIR domains are found at residues 412–468 (IEYI…VEIM) and 474–534 (EDKM…IENN). 4 helical membrane passes run 615 to 635 (TTWT…YYLI), 655 to 675 (FLMG…PFAI), 679 to 699 (VTYV…FCYE), and 718 to 738 (LLYL…FWYF).

The protein belongs to the glycosyltransferase 39 family. PMT1 and PMT2 form a functional heterodimer.

The protein resides in the endoplasmic reticulum membrane. The enzyme catalyses a di-trans,poly-cis-dolichyl beta-D-mannosyl phosphate + L-seryl-[protein] = 3-O-(alpha-D-mannosyl)-L-seryl-[protein] + a di-trans,poly-cis-dolichyl phosphate + H(+). The catalysed reaction is a di-trans,poly-cis-dolichyl beta-D-mannosyl phosphate + L-threonyl-[protein] = 3-O-(alpha-D-mannosyl)-L-threonyl-[protein] + a di-trans,poly-cis-dolichyl phosphate + H(+). Its pathway is protein modification; protein glycosylation. Functionally, protein mannosyltransferase (PMT) involved in hyphal growth and drug sensitivity. Transfers mannose from Dol-P-mannose to Ser or Thr residues on proteins. PMT1, PMT2 and PMT4 account for most of the protein-O-glycosylation activity, while PMT5 and PMT6 may specifically modulate a much narrower spectrum of target proteins. Essential protein that plays an important role in virulence. This chain is Dolichyl-phosphate-mannose--protein mannosyltransferase 2, found in Candida albicans (strain SC5314 / ATCC MYA-2876) (Yeast).